The sequence spans 382 residues: 1-deoxy-D-xylulose 5-phosphate reductoisomerase (382 aa).

NADPH is bound by residues Thr10, Gly11, Ser12, Ile13, Gly36, and Asn122. Residue Lys123 participates in 1-deoxy-D-xylulose 5-phosphate binding. Residue Glu124 participates in NADPH binding. Residue Asp148 participates in Mn(2+) binding. Ser149, Glu150, Ser174, and His197 together coordinate 1-deoxy-D-xylulose 5-phosphate. Glu150 serves as a coordination point for Mn(2+). Gly203 lines the NADPH pocket. 1-deoxy-D-xylulose 5-phosphate-binding residues include Ser210, Asn215, Lys216, and Glu219. Glu219 is a Mn(2+) binding site.

Belongs to the DXR family. The cofactor is Mg(2+). Mn(2+) serves as cofactor.

The enzyme catalyses 2-C-methyl-D-erythritol 4-phosphate + NADP(+) = 1-deoxy-D-xylulose 5-phosphate + NADPH + H(+). It participates in isoprenoid biosynthesis; isopentenyl diphosphate biosynthesis via DXP pathway; isopentenyl diphosphate from 1-deoxy-D-xylulose 5-phosphate: step 1/6. Its function is as follows. Catalyzes the NADPH-dependent rearrangement and reduction of 1-deoxy-D-xylulose-5-phosphate (DXP) to 2-C-methyl-D-erythritol 4-phosphate (MEP). The chain is 1-deoxy-D-xylulose 5-phosphate reductoisomerase from Pelodictyon phaeoclathratiforme (strain DSM 5477 / BU-1).